A 1031-amino-acid polypeptide reads, in one-letter code: Ookinete maturation protein 1 (1031 aa).

Disordered regions lie at residues 125 to 184 (HNEN…PELE), 340 to 405 (KEAE…DGMR), and 609 to 697 (DAEL…NDSI). The span at 141–168 (QKLKKKKKIKKGTKKKSINKISILKHKS) shows a compositional bias: basic residues. Residues 171-180 (SFPSTQNENT) are compositionally biased toward polar residues. A compositionally biased stretch (basic and acidic residues) spans 340-357 (KEAEEEERKKNEDEHILE). Positions 377-394 (LGKSFKNNESFELNSPQK) are enriched in polar residues. Residues 581–646 (IDEENSVFVE…ETQMAGKEEK (66 aa)) are a coiled coil. The span at 610–648 (AELRKDEEEDKSKNNEKDSKSEERDILETQMAGKEEKPV) shows a compositional bias: basic and acidic residues. Over residues 649–659 (LKKKKKNKGKQ) the composition is skewed to basic residues. Residues 660–686 (RNREGKGVVEKGYDAKREKKENEEKNK) show a composition bias toward basic and acidic residues.

Its function is as follows. In the mosquito vector midgut, plays a role in ookinete development. The chain is Ookinete maturation protein 1 from Plasmodium berghei (strain Anka).